The chain runs to 309 residues: Porphobilinogen deaminase (309 aa).

Cys-243 bears the S-(dipyrrolylmethanemethyl)cysteine mark.

It belongs to the HMBS family. Monomer. Dipyrromethane serves as cofactor.

The catalysed reaction is 4 porphobilinogen + H2O = hydroxymethylbilane + 4 NH4(+). It participates in porphyrin-containing compound metabolism; protoporphyrin-IX biosynthesis; coproporphyrinogen-III from 5-aminolevulinate: step 2/4. In terms of biological role, tetrapolymerization of the monopyrrole PBG into the hydroxymethylbilane pre-uroporphyrinogen in several discrete steps. This Deinococcus radiodurans (strain ATCC 13939 / DSM 20539 / JCM 16871 / CCUG 27074 / LMG 4051 / NBRC 15346 / NCIMB 9279 / VKM B-1422 / R1) protein is Porphobilinogen deaminase (hemC).